Reading from the N-terminus, the 117-residue chain is Putative pterin-4-alpha-carbinolamine dehydratase (117 aa).

The protein belongs to the pterin-4-alpha-carbinolamine dehydratase family.

It catalyses the reaction (4aS,6R)-4a-hydroxy-L-erythro-5,6,7,8-tetrahydrobiopterin = (6R)-L-erythro-6,7-dihydrobiopterin + H2O. This Aeromonas salmonicida (strain A449) protein is Putative pterin-4-alpha-carbinolamine dehydratase.